The primary structure comprises 78 residues: Acyl carrier protein (78 aa).

The Carrier domain occupies 2–77 (SEIASRVKAI…DAVSYIEANA (76 aa)). Position 37 is an O-(pantetheine 4'-phosphoryl)serine (S37).

It belongs to the acyl carrier protein (ACP) family. 4'-phosphopantetheine is transferred from CoA to a specific serine of apo-ACP by AcpS. This modification is essential for activity because fatty acids are bound in thioester linkage to the sulfhydryl of the prosthetic group.

Its subcellular location is the cytoplasm. Its pathway is lipid metabolism; fatty acid biosynthesis. Carrier of the growing fatty acid chain in fatty acid biosynthesis. This chain is Acyl carrier protein, found in Phocaeicola vulgatus (strain ATCC 8482 / DSM 1447 / JCM 5826 / CCUG 4940 / NBRC 14291 / NCTC 11154) (Bacteroides vulgatus).